The chain runs to 230 residues: Cytochrome c oxidase subunit 2 (230 aa).

The Mitochondrial intermembrane segment spans residues 1-14; that stretch reads MAHPSQLGFQDAAS. Residues 15-45 traverse the membrane as a helical segment; the sequence is PVMEELLHFHDHALMIVFLISTLVLYIIAAT. Residues 46–59 are Mitochondrial matrix-facing; sequence ASTKLTDKYILDSQ. Residues 60-87 form a helical membrane-spanning segment; the sequence is EIEVIWTIMPAVILILIALPSLRILYLM. Topologically, residues 88–230 are mitochondrial intermembrane; that stretch reads DEINDPHLTV…NWSSLMLEDA (143 aa). Positions 161, 196, 198, 200, 204, and 207 each coordinate Cu cation. Glu-198 serves as a coordination point for Mg(2+).

Belongs to the cytochrome c oxidase subunit 2 family. In terms of assembly, component of the cytochrome c oxidase (complex IV, CIV), a multisubunit enzyme composed of 14 subunits. The complex is composed of a catalytic core of 3 subunits MT-CO1, MT-CO2 and MT-CO3, encoded in the mitochondrial DNA, and 11 supernumerary subunits COX4I, COX5A, COX5B, COX6A, COX6B, COX6C, COX7A, COX7B, COX7C, COX8 and NDUFA4, which are encoded in the nuclear genome. The complex exists as a monomer or a dimer and forms supercomplexes (SCs) in the inner mitochondrial membrane with NADH-ubiquinone oxidoreductase (complex I, CI) and ubiquinol-cytochrome c oxidoreductase (cytochrome b-c1 complex, complex III, CIII), resulting in different assemblies (supercomplex SCI(1)III(2)IV(1) and megacomplex MCI(2)III(2)IV(2)). Found in a complex with TMEM177, COA6, COX18, COX20, SCO1 and SCO2. Interacts with TMEM177 in a COX20-dependent manner. Interacts with COX20. Interacts with COX16. It depends on Cu cation as a cofactor.

It localises to the mitochondrion inner membrane. The catalysed reaction is 4 Fe(II)-[cytochrome c] + O2 + 8 H(+)(in) = 4 Fe(III)-[cytochrome c] + 2 H2O + 4 H(+)(out). Component of the cytochrome c oxidase, the last enzyme in the mitochondrial electron transport chain which drives oxidative phosphorylation. The respiratory chain contains 3 multisubunit complexes succinate dehydrogenase (complex II, CII), ubiquinol-cytochrome c oxidoreductase (cytochrome b-c1 complex, complex III, CIII) and cytochrome c oxidase (complex IV, CIV), that cooperate to transfer electrons derived from NADH and succinate to molecular oxygen, creating an electrochemical gradient over the inner membrane that drives transmembrane transport and the ATP synthase. Cytochrome c oxidase is the component of the respiratory chain that catalyzes the reduction of oxygen to water. Electrons originating from reduced cytochrome c in the intermembrane space (IMS) are transferred via the dinuclear copper A center (CU(A)) of subunit 2 and heme A of subunit 1 to the active site in subunit 1, a binuclear center (BNC) formed by heme A3 and copper B (CU(B)). The BNC reduces molecular oxygen to 2 water molecules using 4 electrons from cytochrome c in the IMS and 4 protons from the mitochondrial matrix. This chain is Cytochrome c oxidase subunit 2 (mt-co2), found in Tetraodon nigroviridis (Spotted green pufferfish).